The sequence spans 587 residues: Aspartate--tRNA ligase (587 aa).

Glu-174 serves as a coordination point for L-aspartate. The segment at 198–201 is aspartate; sequence QITK. Arg-220 is an L-aspartate binding site. ATP is bound by residues 220–222 and Gln-229; that span reads RDE. Residue His-443 participates in L-aspartate binding. Residue Glu-477 participates in ATP binding. Arg-484 is an L-aspartate binding site. Position 529 to 532 (529 to 532) interacts with ATP; sequence GLDR.

It belongs to the class-II aminoacyl-tRNA synthetase family. Type 1 subfamily. As to quaternary structure, homodimer.

The protein resides in the cytoplasm. The enzyme catalyses tRNA(Asp) + L-aspartate + ATP = L-aspartyl-tRNA(Asp) + AMP + diphosphate. In terms of biological role, catalyzes the attachment of L-aspartate to tRNA(Asp) in a two-step reaction: L-aspartate is first activated by ATP to form Asp-AMP and then transferred to the acceptor end of tRNA(Asp). The chain is Aspartate--tRNA ligase from Streptococcus pneumoniae serotype 2 (strain D39 / NCTC 7466).